We begin with the raw amino-acid sequence, 658 residues long: MFQNNPLLAQLKQQIEANKEYVEGTVKASDKAFGFLECDKKSYFIPPMEMKKVMHGDKVKAVVKREDDKEQVEIDSLLEPMLDRFIAQVRFNKDNKLQLIVDHPSIKNIIPANTHKKVTETLESGDWVVAQLKTHPLRDDRFLFAQVTQFICKADDNFAPWWVTLARHEQPREPVANEKSYELHDELDREDLTSLYFTTIDSPSTQDMDDALYIEPIKQGEVQTGWRLVVAIADPTAYIPENSNLEKAARQRCFTNYLPGFNIPMLPRELSDDLCSLVPNEKRPALVGYIETDLAGNITGDTRFVSAWVESKAKLAYDNVSDYLEQVENAWQPESAETKQQIDWLHQFTLARIEWRRNNALLFKESGDYSFELNEDGSVRDIHVEYRRIANQMIEESMIIANICCAKFLADNAKTGVFNTHAGFDPKNLESAQKFLLDTLSTDENRDALTAFYAPEKLATLEGYCEMRRSIDEFPEKFLELRLRRYLTFAEFKSEVAPHLGLGISHYATWTSPIRKYGDMVNHRLIKQVLLGKQAKTVEEGILVRLQEARRQNRLVERDIADWLYARYLFPMVEQAVEFDCEIADVSRGGVRAKVIANGAQIFVPFSTLHDKKEEMEFRPEEIALYIKGEKAYQIGQAVKVKLTEVRLETRSIVGNII.

An RNB domain is found at 189-530 (REDLTSLYFT…VNHRLIKQVL (342 aa)). In terms of domain architecture, S1 motif spans 576-658 (AVEFDCEIAD…ETRSIVGNII (83 aa)).

Belongs to the RNR ribonuclease family. RNase II subfamily.

It is found in the cytoplasm. It carries out the reaction Exonucleolytic cleavage in the 3'- to 5'-direction to yield nucleoside 5'-phosphates.. In terms of biological role, involved in mRNA degradation. Hydrolyzes single-stranded polyribonucleotides processively in the 3' to 5' direction. The chain is Exoribonuclease 2 from Actinobacillus pleuropneumoniae serotype 3 (strain JL03).